Consider the following 307-residue polypeptide: Elongation factor Ts (307 aa).

The tract at residues 80-83 (TDFV) is involved in Mg(2+) ion dislocation from EF-Tu.

This sequence belongs to the EF-Ts family.

It localises to the cytoplasm. Associates with the EF-Tu.GDP complex and induces the exchange of GDP to GTP. It remains bound to the aminoacyl-tRNA.EF-Tu.GTP complex up to the GTP hydrolysis stage on the ribosome. This is Elongation factor Ts from Rhizorhabdus wittichii (strain DSM 6014 / CCUG 31198 / JCM 15750 / NBRC 105917 / EY 4224 / RW1) (Sphingomonas wittichii).